We begin with the raw amino-acid sequence, 273 residues long: Large ribosomal subunit protein uL2 (273 aa).

Disordered stretches follow at residues 28 to 53 (KPFAPLVEKNSKSGGRNNNGRITTRH) and 221 to 273 (RGTA…RRSK). Over residues 39 to 48 (KSGGRNNNGR) the composition is skewed to low complexity.

This sequence belongs to the universal ribosomal protein uL2 family. As to quaternary structure, part of the 50S ribosomal subunit. Forms a bridge to the 30S subunit in the 70S ribosome.

Functionally, one of the primary rRNA binding proteins. Required for association of the 30S and 50S subunits to form the 70S ribosome, for tRNA binding and peptide bond formation. It has been suggested to have peptidyltransferase activity; this is somewhat controversial. Makes several contacts with the 16S rRNA in the 70S ribosome. This chain is Large ribosomal subunit protein uL2, found in Enterobacter sp. (strain 638).